A 284-amino-acid chain; its full sequence is 2-dehydro-3-deoxyphosphooctonate aldolase (284 aa).

This sequence belongs to the KdsA family.

It is found in the cytoplasm. It catalyses the reaction D-arabinose 5-phosphate + phosphoenolpyruvate + H2O = 3-deoxy-alpha-D-manno-2-octulosonate-8-phosphate + phosphate. It participates in carbohydrate biosynthesis; 3-deoxy-D-manno-octulosonate biosynthesis; 3-deoxy-D-manno-octulosonate from D-ribulose 5-phosphate: step 2/3. It functions in the pathway bacterial outer membrane biogenesis; lipopolysaccharide biosynthesis. The protein is 2-dehydro-3-deoxyphosphooctonate aldolase (kdsA) of Mannheimia haemolytica (Pasteurella haemolytica).